The primary structure comprises 362 residues: Endolytic peptidoglycan transglycosylase RlpA (362 aa).

An N-terminal signal peptide occupies residues 1–17 (MRKQWLGICIAAGMLAA). C18 carries N-palmitoyl cysteine lipidation. C18 carries the S-diacylglycerol cysteine lipid modification. The interval 198–276 (PDLSGGAGTS…PSTTPATSPA (79 aa)) is disordered. The span at 262–276 (PVVTAPSTTPATSPA) shows a compositional bias: low complexity. The SPOR domain maps to 285–361 (QSASGNFMVQ…AQLQSFITTA (77 aa)).

This sequence belongs to the RlpA family.

It localises to the cell membrane. Its function is as follows. Lytic transglycosylase with a strong preference for naked glycan strands that lack stem peptides. The chain is Endolytic peptidoglycan transglycosylase RlpA from Escherichia coli (strain K12).